The chain runs to 77 residues: Rhodotorucin-A peptides type 2 (77 aa).

A propeptide spanning residues 1–3 (MVA) is cleaved from the precursor. Residue C14 is the site of S-farnesyl cysteine attachment. The propeptide occupies 15–18 (TVAK). A lipid anchor (S-farnesyl cysteine) is attached at C29. A propeptide spanning residues 30–33 (TVSK) is cleaved from the precursor. C44 is lipidated: S-farnesyl cysteine. Residues 45–48 (TVSK) constitute a propeptide that is removed on maturation. C59 carries the S-farnesyl cysteine lipid modification. The propeptide occupies 60–63 (TVSK). Residue C74 is the site of S-farnesyl cysteine attachment. Residues 75-77 (TVA) constitute a propeptide that is removed on maturation.

Its subcellular location is the cell membrane. Its function is as follows. Rhodotorucin-A is a mating pheromone in cells of mating type A of Rhodosporidium toruloides. This Rhodotorula toruloides (Yeast) protein is Rhodotorucin-A peptides type 2 (RHA2).